Here is a 171-residue protein sequence, read N- to C-terminus: ATP synthase subunit b (171 aa).

The chain crosses the membrane as a helical span at residues 12–34 (FGLNLNLFETNVINLAVVIFGLY).

Belongs to the ATPase B chain family. As to quaternary structure, F-type ATPases have 2 components, F(1) - the catalytic core - and F(0) - the membrane proton channel. F(1) has five subunits: alpha(3), beta(3), gamma(1), delta(1), epsilon(1). F(0) has four main subunits: a(1), b(1), b'(1) and c(10-14). The alpha and beta chains form an alternating ring which encloses part of the gamma chain. F(1) is attached to F(0) by a central stalk formed by the gamma and epsilon chains, while a peripheral stalk is formed by the delta, b and b' chains.

The protein resides in the cellular thylakoid membrane. F(1)F(0) ATP synthase produces ATP from ADP in the presence of a proton or sodium gradient. F-type ATPases consist of two structural domains, F(1) containing the extramembraneous catalytic core and F(0) containing the membrane proton channel, linked together by a central stalk and a peripheral stalk. During catalysis, ATP synthesis in the catalytic domain of F(1) is coupled via a rotary mechanism of the central stalk subunits to proton translocation. Its function is as follows. Component of the F(0) channel, it forms part of the peripheral stalk, linking F(1) to F(0). The sequence is that of ATP synthase subunit b from Prochlorococcus marinus (strain MIT 9211).